The sequence spans 427 residues: UDP-N-acetylglucosamine 1-carboxyvinyltransferase 1 (427 aa).

Residue Lys-23 to Asn-24 coordinates phosphoenolpyruvate. Arg-96 is a binding site for UDP-N-acetyl-alpha-D-glucosamine. Cys-120 functions as the Proton donor in the catalytic mechanism. Cys-120 bears the 2-(S-cysteinyl)pyruvic acid O-phosphothioketal mark. UDP-N-acetyl-alpha-D-glucosamine is bound by residues Arg-125–Leu-129, Asp-309, and Val-331.

This sequence belongs to the EPSP synthase family. MurA subfamily.

The protein localises to the cytoplasm. It carries out the reaction phosphoenolpyruvate + UDP-N-acetyl-alpha-D-glucosamine = UDP-N-acetyl-3-O-(1-carboxyvinyl)-alpha-D-glucosamine + phosphate. The protein operates within cell wall biogenesis; peptidoglycan biosynthesis. In terms of biological role, cell wall formation. Adds enolpyruvyl to UDP-N-acetylglucosamine. The protein is UDP-N-acetylglucosamine 1-carboxyvinyltransferase 1 of Streptococcus pneumoniae serotype 4 (strain ATCC BAA-334 / TIGR4).